The sequence spans 365 residues: Protein Wnt-6 (365 aa).

Residues Met-1–Gly-24 form the signal peptide. 11 disulfides stabilise this stretch: Cys-76-Cys-87, Cys-124-Cys-132, Cys-134-Cys-172, Cys-222-Cys-236, Cys-224-Cys-231, Cys-294-Cys-325, Cys-310-Cys-320, Cys-324-Cys-364, Cys-340-Cys-355, Cys-342-Cys-352, and Cys-347-Cys-348. Residue Asn-86 is glycosylated (N-linked (GlcNAc...) asparagine). Over residues Arg-140–Ala-158 the composition is skewed to pro residues. Residues Arg-140 to Ser-164 are disordered. The O-palmitoleoyl serine; by PORCN moiety is linked to residue Ser-228. Asn-311 carries an N-linked (GlcNAc...) asparagine glycan.

The protein belongs to the Wnt family. In terms of assembly, interacts with PORCN. Palmitoleoylation is required for efficient binding to frizzled receptors. Depalmitoleoylation leads to Wnt signaling pathway inhibition. In terms of tissue distribution, expressed in gastric cancer cell lines and gastric cancer tissues (at protein level). Detected in the apical gland region of the gastric foveolar epithelium (at protein level).

Its subcellular location is the secreted. It is found in the extracellular space. It localises to the extracellular matrix. Functionally, ligand for members of the frizzled family of seven transmembrane receptors. Probable developmental protein. May be a signaling molecule which affects the development of discrete regions of tissues. Is likely to signal over only few cell diameters. Together with CAV1 may promote chemoresistance of gastric cancer cells to DNA-damaging anthracycline drugs through the activation of the canonical Wnt receptor signaling pathway. The chain is Protein Wnt-6 (WNT6) from Homo sapiens (Human).